We begin with the raw amino-acid sequence, 179 residues long: Adenine phosphoribosyltransferase (179 aa).

Belongs to the purine/pyrimidine phosphoribosyltransferase family. In terms of assembly, homodimer.

Its subcellular location is the cytoplasm. It carries out the reaction AMP + diphosphate = 5-phospho-alpha-D-ribose 1-diphosphate + adenine. Its pathway is purine metabolism; AMP biosynthesis via salvage pathway; AMP from adenine: step 1/1. In terms of biological role, catalyzes a salvage reaction resulting in the formation of AMP, that is energically less costly than de novo synthesis. The sequence is that of Adenine phosphoribosyltransferase from Haemophilus ducreyi (strain 35000HP / ATCC 700724).